Consider the following 85-residue polypeptide: MTDKIRSVQGKVVSDKMDKSFVVAIERKVKHPLYGKFIRRTTKLHVHDENNEAKLGDIVEIKECRPLSKTKSWTLVRVVEKAVVA.

Belongs to the universal ribosomal protein uS17 family. In terms of assembly, part of the 30S ribosomal subunit.

Its function is as follows. One of the primary rRNA binding proteins, it binds specifically to the 5'-end of 16S ribosomal RNA. In Pasteurella multocida (strain Pm70), this protein is Small ribosomal subunit protein uS17.